A 450-amino-acid chain; its full sequence is Phosphoglucosamine mutase (450 aa).

Ser-104 functions as the Phosphoserine intermediate in the catalytic mechanism. Positions 104, 241, 243, and 245 each coordinate Mg(2+). The residue at position 104 (Ser-104) is a Phosphoserine.

This sequence belongs to the phosphohexose mutase family. The cofactor is Mg(2+). Post-translationally, activated by phosphorylation.

The catalysed reaction is alpha-D-glucosamine 1-phosphate = D-glucosamine 6-phosphate. Functionally, catalyzes the conversion of glucosamine-6-phosphate to glucosamine-1-phosphate. This Renibacterium salmoninarum (strain ATCC 33209 / DSM 20767 / JCM 11484 / NBRC 15589 / NCIMB 2235) protein is Phosphoglucosamine mutase.